A 980-amino-acid polypeptide reads, in one-letter code: Putative leucine-rich repeat receptor-like serine/threonine-protein kinase At2g24130 (980 aa).

An N-terminal signal peptide occupies residues 1-20 (MDYCSLLVVSFLITVMTVLA). At 21-593 (SKENDHELIK…ACKKKHKYPS (573 aa)) the chain is on the extracellular side. N-linked (GlcNAc...) asparagine glycosylation is found at Asn-55 and Asn-88. LRR repeat units lie at residues 65–89 (STQVIELDISGRDLGGEISPSIANL), 90–113 (TGLTVLDLSRNFFVGKIPPEIGSL), 115–138 (ETLKQLSLSENLLHGNIPQELGLL), 139–162 (NRLVYLDLGSNRLNGSIPVQLFCN), 165–189 (SSSLQYIDLSNNSLTGEIPLNYHCH), 191–214 (KELRFLLLWSNKLTGTVPSSLSNS), 215–238 (TNLKWMDLESNMLSGELPSQVISK), and 240–263 (PQLQFLYLSYNHFVSHNNNTNLEP). 4 N-linked (GlcNAc...) asparagine glycosylation sites follow: Asn-152, Asn-162, Asn-175, and Asn-213. 2 N-linked (GlcNAc...) asparagine glycosylation sites follow: Asn-257 and Asn-270. LRR repeat units follow at residues 271–295 (SSDLQELELAGNSLGGEITSSVRHL), 296–320 (SVNLVQIHLDQNRIHGSIPPEISNL), 322–344 (NLTLLNLSSNLLSGPIPRELCKL), 345–370 (SKLERVYLSNNHLTGEIPMELGDIPR), 372–391 (GLLDVSRNNLSGSIPDSFGN), 392–416 (LSQLRRLLLYGNHLSGTVPQSLGKC), 417–440 (INLEILDLSHNNLTGTIPVEVVSN), 442–463 (RNLKLYLNLSSNHLSGPIPLEL), 464–490 (SKMDMVLSVDLSSNELSGKIPPQLGSC), 491–514 (IALEHLNLSRNGFSSTLPSSLGQL), 515–537 (PYLKELDVSFNRLTGAIPPSFQQ), and 539–563 (STLKHLNFSFNLLSGNVSDKGSFSK). N-linked (GlcNAc...) asparagine glycosylation is found at Asn-322 and Asn-327. N-linked (GlcNAc...) asparagine glycosylation is found at Asn-380 and Asn-391. 2 N-linked (GlcNAc...) asparagine glycosylation sites follow: Asn-428 and Asn-449. Asn-497 carries N-linked (GlcNAc...) asparagine glycosylation. N-linked (GlcNAc...) asparagine glycans are attached at residues Asn-545 and Asn-554. The helical transmembrane segment at 594–614 (VLLPVLLSLIATPVLCVFGYP) threads the bilayer. Residues 615–980 (LVQRSRFGKN…SQETQGEASS (366 aa)) lie on the Cytoplasmic side of the membrane. The residue at position 658 (Thr-658) is a Phosphothreonine. One can recognise a Protein kinase domain in the interval 661 to 960 (FNASSLIGSG…HEMGRLKEYL (300 aa)). Residues 667–675 (IGSGRFGHV) and Lys-689 contribute to the ATP site. Position 775 is a phosphotyrosine (Tyr-775). Asp-788 acts as the Proton acceptor in catalysis. The residue at position 841 (Tyr-841) is a Phosphotyrosine.

This sequence belongs to the protein kinase superfamily. Ser/Thr protein kinase family.

The protein resides in the cell membrane. It catalyses the reaction L-seryl-[protein] + ATP = O-phospho-L-seryl-[protein] + ADP + H(+). The catalysed reaction is L-threonyl-[protein] + ATP = O-phospho-L-threonyl-[protein] + ADP + H(+). The protein is Putative leucine-rich repeat receptor-like serine/threonine-protein kinase At2g24130 of Arabidopsis thaliana (Mouse-ear cress).